Consider the following 380-residue polypeptide: Cystathionine gamma-synthase (380 aa).

Lys-195 is subject to N6-(pyridoxal phosphate)lysine.

It belongs to the trans-sulfuration enzymes family. As to quaternary structure, homotetramer. Pyridoxal 5'-phosphate is required as a cofactor.

The protein resides in the cytoplasm. The enzyme catalyses O-succinyl-L-homoserine + L-cysteine = L,L-cystathionine + succinate + H(+). In terms of biological role, catalyzes the formation of L-cystathionine from O-succinyl-L-homoserine (OSHS) and L-cysteine, via a gamma-replacement reaction. In the absence of thiol, catalyzes gamma-elimination to form 2-oxobutanoate, succinate and ammonia. In Helicobacter pylori (strain J99 / ATCC 700824) (Campylobacter pylori J99), this protein is Cystathionine gamma-synthase (metB).